The primary structure comprises 350 residues: Erythronate-4-phosphate dehydrogenase (350 aa).

Residues serine 45 and threonine 66 each contribute to the substrate site. NAD(+) is bound by residues 124–125 (QV), aspartate 144, 203–205 (ASR), and aspartate 226. Residue arginine 205 is part of the active site. Glutamate 231 is a catalytic residue. Histidine 248 functions as the Proton donor in the catalytic mechanism. NAD(+) is bound at residue glycine 251.

This sequence belongs to the D-isomer specific 2-hydroxyacid dehydrogenase family. PdxB subfamily. In terms of assembly, homodimer.

Its subcellular location is the cytoplasm. It catalyses the reaction 4-phospho-D-erythronate + NAD(+) = (R)-3-hydroxy-2-oxo-4-phosphooxybutanoate + NADH + H(+). Its pathway is cofactor biosynthesis; pyridoxine 5'-phosphate biosynthesis; pyridoxine 5'-phosphate from D-erythrose 4-phosphate: step 2/5. Functionally, catalyzes the oxidation of erythronate-4-phosphate to 3-hydroxy-2-oxo-4-phosphonooxybutanoate. The sequence is that of Erythronate-4-phosphate dehydrogenase from Legionella pneumophila (strain Lens).